A 329-amino-acid chain; its full sequence is Malate dehydrogenase (329 aa).

Residue 12–18 (GAAGQIG) coordinates NAD(+). Residues R93 and R99 each coordinate substrate. NAD(+) is bound by residues N106, Q113, and 130-132 (VGN). The substrate site is built by N132 and R163. Catalysis depends on H188, which acts as the Proton acceptor.

Belongs to the LDH/MDH superfamily. MDH type 2 family.

It carries out the reaction (S)-malate + NAD(+) = oxaloacetate + NADH + H(+). Its activity is regulated as follows. Strongly inhibited by Hg(2+) and Zn(2+). Activated by Na(+), NH(4)(+), Ca(2+), Cu(2+) and Mg(2+). Functionally, catalyzes the reversible oxidation of malate to oxaloacetate. Exhibits remarkably higher catalytic efficiency for oxaloacetate reduction than for malate oxidation in vitro. Highly specific for NAD(H). Can also use NADPH for oxaloacetate reduction, but catalytic efficiency is 97-fold higher with NADH. No activity detected with NADP(+) and malate. The polypeptide is Malate dehydrogenase (Streptomyces avermitilis (strain ATCC 31267 / DSM 46492 / JCM 5070 / NBRC 14893 / NCIMB 12804 / NRRL 8165 / MA-4680)).